The sequence spans 243 residues: Probable 6-phosphogluconolactonase (243 aa).

The protein belongs to the glucosamine/galactosamine-6-phosphate isomerase family. 6-phosphogluconolactonase subfamily.

The catalysed reaction is 6-phospho-D-glucono-1,5-lactone + H2O = 6-phospho-D-gluconate + H(+). It participates in carbohydrate degradation; pentose phosphate pathway; D-ribulose 5-phosphate from D-glucose 6-phosphate (oxidative stage): step 2/3. Its function is as follows. Hydrolysis of 6-phosphogluconolactone to 6-phosphogluconate. The protein is Probable 6-phosphogluconolactonase of Drosophila melanogaster (Fruit fly).